The sequence spans 226 residues: Gap junction beta-2 protein (226 aa).

At 1 to 20 (MDWGGLHTILGGVNKHSTSI) the chain is on the cytoplasmic side. A helical membrane pass occupies residues 21-40 (GKIWLTVLFIFRIMILVVAA). The Extracellular segment spans residues 41–75 (KEVWGDEQADFVCNTLQPGCKNVCYDHYFPISHIR). Intrachain disulfides connect Cys53-Cys180, Cys60-Cys174, and Cys64-Cys169. Residues 76–98 (LWALQLIFVSTPALLVAMHVAYY) form a helical membrane-spanning segment. Residues 99 to 131 (RHEKKRKFIRGEIKTEFKDIEEIKKQKVRIEGS) lie on the Cytoplasmic side of the membrane. The helical transmembrane segment at 132 to 154 (LWWTYTGSIFFRVIFEAAFMYVF) threads the bilayer. Residues 155-192 (YVMYDGFAMQRLVKCNAWPCPNTVDCFVSRPTEKTVFT) are Extracellular-facing. The chain crosses the membrane as a helical span at residues 193–215 (VFMIAVSGICILLNVTELCYLLI). Residues 216–226 (RFCSGKSKKPV) are Cytoplasmic-facing.

The protein belongs to the connexin family. As to quaternary structure, a connexon is composed of a hexamer of connexins. Interacts with CNST.

Its subcellular location is the cell membrane. It is found in the cell junction. The protein localises to the gap junction. One gap junction consists of a cluster of closely packed pairs of transmembrane channels, the connexons, through which materials of low MW diffuse from one cell to a neighboring cell. The protein is Gap junction beta-2 protein (GJB2) of Bos taurus (Bovine).